Here is a 313-residue protein sequence, read N- to C-terminus: Tyrosine recombinase XerC (313 aa).

Positions 11-97 (NSLQKPLERF…SLRSFFDFLI (87 aa)) constitute a Core-binding (CB) domain. One can recognise a Tyr recombinase domain in the interval 118-298 (PLPKNLDVDE…DFQHLAQAYD (181 aa)). Active-site residues include Arg157, Lys181, His250, Arg253, and His276. Residue Tyr285 is the O-(3'-phospho-DNA)-tyrosine intermediate of the active site.

The protein belongs to the 'phage' integrase family. XerC subfamily. Forms a cyclic heterotetrameric complex composed of two molecules of XerC and two molecules of XerD.

The protein localises to the cytoplasm. Site-specific tyrosine recombinase, which acts by catalyzing the cutting and rejoining of the recombining DNA molecules. The XerC-XerD complex is essential to convert dimers of the bacterial chromosome into monomers to permit their segregation at cell division. It also contributes to the segregational stability of plasmids. The chain is Tyrosine recombinase XerC from Vibrio campbellii (strain ATCC BAA-1116).